The chain runs to 489 residues: Virion host shutoff protein (489 aa).

Disordered stretches follow at residues 110–135 (EEAS…AFSN), 142–161 (SLAS…PSAA), 285–319 (RSQT…ETRV), and 332–364 (GYED…LTPP). Residues 124–134 (ITDSRPSSAFS) show a composition bias toward polar residues.

The protein belongs to the herpesviridae VHS protein family. As to quaternary structure, interacts with human EIF4H, EIF4A1 and EIF4A2; interaction with eIF4AI and EIF4A2 presumably allows Vhs protein to associate with the eIF4F cap-binding complex.

It localises to the virion. Its function is as follows. Minor structural protein that acts as an endoribonuclease during lytic infection. Degrades host mRNAs in the cytoplasm by cutting them at preferred sites, including some in regions of translation initiation. Together with inhibition of host splicing by ICP27, contributes to an overall decrease in host protein synthesis. Also, after the onset of viral transcription, accelerates the turnover of viral mRNA, thereby facilitating the sequential expression of different classes of viral genes. Binds translation initiation factors eIF4H, eIF4AI, and eIF4AII, thereby may interact directly with the translation initiation complex and thus digest specifically mRNAs. Also impedes antigen presentation by major histocompatibility complex class I and class II molecules, inhibits secretion of cytokines that would otherwise recruit lymphocytes and neutrophils cells to the site of infection and blocks the activation of dendritic cells. Plays a role in the inhibition of interferon-beta activation by the cGAS/STING pathway. Mechanistically, down-regulates the expression of host cGAS/MB21D1. Also decreases the accumulation of other interferon-induced mRNAs such as host IFIT3 or CH25H to subvert their antiviral activity. This chain is Virion host shutoff protein (UL41), found in Human herpesvirus 1 (strain 17) (HHV-1).